A 111-amino-acid chain; its full sequence is Large ribosomal subunit protein uL22 (111 aa).

It belongs to the universal ribosomal protein uL22 family. As to quaternary structure, part of the 50S ribosomal subunit.

Its function is as follows. This protein binds specifically to 23S rRNA; its binding is stimulated by other ribosomal proteins, e.g. L4, L17, and L20. It is important during the early stages of 50S assembly. It makes multiple contacts with different domains of the 23S rRNA in the assembled 50S subunit and ribosome. The globular domain of the protein is located near the polypeptide exit tunnel on the outside of the subunit, while an extended beta-hairpin is found that lines the wall of the exit tunnel in the center of the 70S ribosome. The chain is Large ribosomal subunit protein uL22 from Chlamydia pneumoniae (Chlamydophila pneumoniae).